A 234-amino-acid chain; its full sequence is Small ribosomal subunit protein uS2c (234 aa).

This sequence belongs to the universal ribosomal protein uS2 family.

It is found in the plastid. Its subcellular location is the chloroplast. The chain is Small ribosomal subunit protein uS2c (rps2) from Pinus thunbergii (Japanese black pine).